Reading from the N-terminus, the 576-residue chain is Cilia- and flagella-associated protein 100 (576 aa).

Positions 1–29 are disordered; that stretch reads MPIYDEASVPGTAAGRSTTDVGATAGANP. Coiled coils occupy residues 125–226, 254–311, and 342–408; these read IFLL…CRRY, VAEW…IMKE, and YKQL…LKDR. Disordered regions lie at residues 417–439, 495–519, and 538–563; these read TLSMGSSNAPTSSVTGSSGPGGP, AEKAREKDRRKVARDEKLSTQHREH, and TGKPLMFRSAPPQRKKVVQADDRNDE.

This sequence belongs to the CFAP100 family. Interacts with FAP73; form the modifier of inner arm (MIA) complex.

The protein localises to the cytoplasm. Its subcellular location is the cytoskeleton. It is found in the flagellum axoneme. As part of MIA, a complex associated with the outer doublet microtubules of the axoneme, may play a role in ciliary/flagellar motility by regulating the assembly and the activity of axonemal inner dynein arm. The polypeptide is Cilia- and flagella-associated protein 100 (Chlamydomonas reinhardtii (Chlamydomonas smithii)).